The primary structure comprises 513 residues: Putative ATP-dependent RNA helicase QP509L (513 aa).

The 153-residue stretch at 110–262 (KKLLSPYGRF…KIIIHHLGQP (153 aa)) folds into the Helicase ATP-binding domain. 123–130 (LNTGLGKT) serves as a coordination point for ATP. Positions 215–218 (DEAH) match the DEAH box motif.

It belongs to the DEAD box helicase family. DEAH subfamily.

It carries out the reaction ATP + H2O = ADP + phosphate + H(+). The polypeptide is Putative ATP-dependent RNA helicase QP509L (African swine fever virus (isolate Tick/South Africa/Pretoriuskop Pr4/1996) (ASFV)).